The sequence spans 136 residues: MSLLKEFKAFASRGNVIDMAVGIIIGAAFGKIVSSFVADIIMPPIGIILGGVNFSDLSFVLLAAQGDAPAVVIAYGKFIQTVVDFTIIAFAIFMGLKAINSLKRKEEEAPKAPPAPTKDQELLSEIRDLLKAQQDK.

The next 4 helical transmembrane spans lie at 9–29 (AFAS…GAAF), 32–52 (IVSS…LGGV), 54–74 (FSDL…VVIA), and 79–99 (IQTV…LKAI).

The protein belongs to the MscL family. In terms of assembly, homopentamer.

Its subcellular location is the cell inner membrane. Its function is as follows. Channel that opens in response to stretch forces in the membrane lipid bilayer. May participate in the regulation of osmotic pressure changes within the cell. This chain is Large-conductance mechanosensitive channel, found in Vibrio cholerae serotype O1 (strain ATCC 39541 / Classical Ogawa 395 / O395).